The chain runs to 149 residues: Ribonuclease-like 3 (149 aa).

The N-terminal stretch at 1–22 is a signal peptide; it reads MGIHQCTAVVLLLLCASLSTYG. Gln-23 carries the pyrrolidone carboxylic acid modification. His-38 acts as the Proton acceptor in catalysis. Disulfide bonds link Cys-48–Cys-109, Cys-66–Cys-120, and Cys-84–Cys-135. Position 67 to 71 (67 to 71) interacts with substrate; it reads KEVNT. His-142 serves as the catalytic Proton donor.

The protein belongs to the pancreatic ribonuclease family. In terms of processing, cleavage between Arg-55 and Arg-56 is catalyzed by a membrane-localized Gram-negative bacterium protease (OmpT in E.coli). The excised fragment is then transported to the bacterium cytosol for cleavage of the disulfide bridge linking Cys-48 and Cys-109, thus separating the N-terminal and LF-ZF3. LF-ZF3 but not the N-terminal peptide possesses bactericidal activity. As to expression, strongly expressed in the adult liver and gut, and weakly in the heart and testis.

It is found in the secreted. In terms of biological role, ribonuclease. Angiogenic. Plays a role in host defense. Exhibits strong antibacterial activity against Gram-negative bacteria but mild antibacterial activity against Gram-positive bacteria. The RNase activity is not required for the bactericidal activity. This Danio rerio (Zebrafish) protein is Ribonuclease-like 3.